The chain runs to 255 residues: Fasciclin-like arabinogalactan protein 14 (255 aa).

A signal peptide spans 1–23 (MSSSLTIFFFFFASTFLYTSSNS). The 146-residue stretch at 24–169 (FNITNILNEH…ISVLHISSAI (146 aa)) folds into the FAS1 domain. 4 N-linked (GlcNAc...) asparagine glycosylation sites follow: asparagine 25, asparagine 99, asparagine 125, and asparagine 159. Positions 179–231 (PTASPLSPVSSPPRPAESPNDDGQDFDEPPSSAPGAAADEPSENAGSANGVSR) are disordered. Residues 197–206 (PNDDGQDFDE) are compositionally biased toward acidic residues. The segment covering 222–231 (NAGSANGVSR) has biased composition (polar residues). Serine 225 carries GPI-anchor amidated serine lipidation. A propeptide spans 226-255 (ANGVSRNDSQPAFAFTLLMSFIWWFMARLR) (removed in mature form).

It belongs to the fasciclin-like AGP family.

It is found in the cell membrane. May be a cell surface adhesion protein. In Arabidopsis thaliana (Mouse-ear cress), this protein is Fasciclin-like arabinogalactan protein 14 (FLA14).